We begin with the raw amino-acid sequence, 91 residues long: Sec-independent protein translocase protein TatA (91 aa).

Residues 1-21 (MGAMSPWHWAIVALVVIILFG) form a helical membrane-spanning segment. The disordered stretch occupies residues 44 to 91 (KEMQNDNSTPAPTAQQSAPAELPVADTTTAPVTPPAPVQPQHTEPKSA). A compositionally biased stretch (low complexity) spans 51-74 (STPAPTAQQSAPAELPVADTTTAP).

The protein belongs to the TatA/E family. In terms of assembly, the Tat system comprises two distinct complexes: a TatABC complex, containing multiple copies of TatA, TatB and TatC subunits, and a separate TatA complex, containing only TatA subunits. Substrates initially bind to the TatABC complex, which probably triggers association of the separate TatA complex to form the active translocon.

It is found in the cell membrane. In terms of biological role, part of the twin-arginine translocation (Tat) system that transports large folded proteins containing a characteristic twin-arginine motif in their signal peptide across membranes. TatA could form the protein-conducting channel of the Tat system. The polypeptide is Sec-independent protein translocase protein TatA (Rhodococcus jostii (strain RHA1)).